We begin with the raw amino-acid sequence, 499 residues long: Glycerol kinase (499 aa).

T17 contacts ADP. T17, T18, and S19 together coordinate ATP. Residue T17 participates in sn-glycerol 3-phosphate binding. R21 is a binding site for ADP. R87, E88, Y139, and D243 together coordinate sn-glycerol 3-phosphate. Glycerol is bound by residues R87, E88, Y139, D243, and Q244. ADP is bound by residues T265 and G308. Positions 265, 308, 312, and 409 each coordinate ATP. Residues G409 and N413 each coordinate ADP.

The protein belongs to the FGGY kinase family.

It catalyses the reaction glycerol + ATP = sn-glycerol 3-phosphate + ADP + H(+). The protein operates within polyol metabolism; glycerol degradation via glycerol kinase pathway; sn-glycerol 3-phosphate from glycerol: step 1/1. With respect to regulation, inhibited by fructose 1,6-bisphosphate (FBP). Its function is as follows. Key enzyme in the regulation of glycerol uptake and metabolism. Catalyzes the phosphorylation of glycerol to yield sn-glycerol 3-phosphate. The protein is Glycerol kinase of Pseudomonas entomophila (strain L48).